A 408-amino-acid polypeptide reads, in one-letter code: Exo-alpha-sialidase ARB_03431 (408 aa).

The signal sequence occupies residues 1-22 (MGIKQWLLSLVVVAISATATQA). Substrate is bound by residues R62, R81, D87, and Q150. A glycan (N-linked (GlcNAc...) asparagine) is linked at N237. Residues R267, R324, 324-325 (RT), 333-334 (YD), K339, Y360, D378, and 378-380 (DWY) contribute to the substrate site. N-linked (GlcNAc...) asparagine glycosylation is present at N398.

It belongs to the glycosyl hydrolase 33 family.

It localises to the secreted. The enzyme catalyses Hydrolysis of alpha-(2-&gt;3)-, alpha-(2-&gt;6)-, alpha-(2-&gt;8)- glycosidic linkages of terminal sialic acid residues in oligosaccharides, glycoproteins, glycolipids, colominic acid and synthetic substrates.. Functionally, sialidase is able to release sialic acid from a wide variety of natural substrates. The polypeptide is Exo-alpha-sialidase ARB_03431 (Arthroderma benhamiae (strain ATCC MYA-4681 / CBS 112371) (Trichophyton mentagrophytes)).